The sequence spans 459 residues: ATP synthase subunit beta (459 aa).

Residue Gly-148–Thr-155 coordinates ATP.

This sequence belongs to the ATPase alpha/beta chains family. As to quaternary structure, F-type ATPases have 2 components, CF(1) - the catalytic core - and CF(0) - the membrane proton channel. CF(1) has five subunits: alpha(3), beta(3), gamma(1), delta(1), epsilon(1). CF(0) has three main subunits: a(1), b(2) and c(9-12). The alpha and beta chains form an alternating ring which encloses part of the gamma chain. CF(1) is attached to CF(0) by a central stalk formed by the gamma and epsilon chains, while a peripheral stalk is formed by the delta and b chains.

It is found in the cell inner membrane. The enzyme catalyses ATP + H2O + 4 H(+)(in) = ADP + phosphate + 5 H(+)(out). Produces ATP from ADP in the presence of a proton gradient across the membrane. The catalytic sites are hosted primarily by the beta subunits. The polypeptide is ATP synthase subunit beta (Vesicomyosocius okutanii subsp. Calyptogena okutanii (strain HA)).